A 485-amino-acid chain; its full sequence is Cobyric acid synthase (485 aa).

One can recognise a GATase cobBQ-type domain in the interval 249 to 437; sequence HLKIRVPVWQ…WHGLFSQPSA (189 aa). Cys330 functions as the Nucleophile in the catalytic mechanism. His429 is a catalytic residue.

Belongs to the CobB/CobQ family. CobQ subfamily.

Its pathway is cofactor biosynthesis; adenosylcobalamin biosynthesis. In terms of biological role, catalyzes amidations at positions B, D, E, and G on adenosylcobyrinic A,C-diamide. NH(2) groups are provided by glutamine, and one molecule of ATP is hydrogenolyzed for each amidation. This is Cobyric acid synthase from Saccharophagus degradans (strain 2-40 / ATCC 43961 / DSM 17024).